Reading from the N-terminus, the 197-residue chain is RNA pyrophosphohydrolase (197 aa).

The Nudix hydrolase domain maps to 6–149; that stretch reads GYRPNVGIVI…KRDVYRKAMK (144 aa). The Nudix box motif lies at 38–59; the sequence is GGINDGETPEQAMYRELYEEVG. The interval 165-197 is disordered; that stretch reads LSTNNNDEKKANYSAKKPYSPYRNQDKKRKTRV.

Belongs to the Nudix hydrolase family. RppH subfamily. A divalent metal cation serves as cofactor.

Accelerates the degradation of transcripts by removing pyrophosphate from the 5'-end of triphosphorylated RNA, leading to a more labile monophosphorylated state that can stimulate subsequent ribonuclease cleavage. This is RNA pyrophosphohydrolase from Mannheimia succiniciproducens (strain KCTC 0769BP / MBEL55E).